Reading from the N-terminus, the 260-residue chain is Dolichol-phosphate mannosyltransferase subunit 1 (260 aa).

Residue alanine 2 is modified to N-acetylalanine. 2 positions are modified to phosphoserine: serine 3 and serine 9. GDP-alpha-D-mannose is bound by residues proline 32, tyrosine 34, glutamate 36, isoleucine 63, aspartate 65, aspartate 118, alanine 119, aspartate 120, arginine 147, arginine 234, and lysine 240. Mg(2+) is bound at residue aspartate 120. Position 120 (aspartate 120) interacts with Mn(2+).

This sequence belongs to the glycosyltransferase 2 family. Component of the dolichol-phosphate mannose (DPM) synthase complex composed of DPM1, DPM2 and DPM3; within the complex, directly interacts with DPM3. This interaction stabilizes DPM1. Mg(2+) is required as a cofactor. It depends on Mn(2+) as a cofactor. The cofactor is Ca(2+).

Its subcellular location is the endoplasmic reticulum. The enzyme catalyses a di-trans,poly-cis-dolichyl phosphate + GDP-alpha-D-mannose = a di-trans,poly-cis-dolichyl beta-D-mannosyl phosphate + GDP. It functions in the pathway protein modification; protein glycosylation. In terms of biological role, transfers mannose from GDP-mannose to dolichol monophosphate to form dolichol phosphate mannose (Dol-P-Man) which is the mannosyl donor in pathways leading to N-glycosylation, glycosyl phosphatidylinositol membrane anchoring, and O-mannosylation of proteins; catalytic subunit of the dolichol-phosphate mannose (DPM) synthase complex. The chain is Dolichol-phosphate mannosyltransferase subunit 1 (DPM1) from Homo sapiens (Human).